A 101-amino-acid polypeptide reads, in one-letter code: Small ribosomal subunit protein uS14 (101 aa).

The protein belongs to the universal ribosomal protein uS14 family. Part of the 30S ribosomal subunit. Contacts proteins S3 and S10.

Binds 16S rRNA, required for the assembly of 30S particles and may also be responsible for determining the conformation of the 16S rRNA at the A site. In Aeromonas salmonicida (strain A449), this protein is Small ribosomal subunit protein uS14.